Here is a 359-residue protein sequence, read N- to C-terminus: UPF0284 protein MAE_56900 (359 aa).

This sequence belongs to the UPF0284 family.

The sequence is that of UPF0284 protein MAE_56900 from Microcystis aeruginosa (strain NIES-843 / IAM M-2473).